The following is a 39-amino-acid chain: Photosystem II reaction center protein X (39 aa).

The chain crosses the membrane as a helical span at residues 10-30 (SSLVWAAVIVVIPAAVALVLI).

Belongs to the PsbX family. Type 1 subfamily. PSII is composed of 1 copy each of membrane proteins PsbA, PsbB, PsbC, PsbD, PsbE, PsbF, PsbH, PsbI, PsbJ, PsbK, PsbL, PsbM, PsbT, PsbX, PsbY, Psb30/Ycf12, peripheral proteins PsbO, CyanoQ (PsbQ), PsbU, PsbV and a large number of cofactors. It forms dimeric complexes.

The protein localises to the cellular thylakoid membrane. In terms of biological role, involved in the binding and/or turnover of quinones at the Q(B) site of photosystem II (PSII). PSII is a light-driven water plastoquinone oxidoreductase, using light energy to abstract electrons from H(2)O, generating a proton gradient subsequently used for ATP formation. This Prochlorococcus marinus (strain MIT 9303) protein is Photosystem II reaction center protein X.